A 680-amino-acid chain; its full sequence is Coiled-coil domain-containing protein 138 (680 aa).

T63 bears the Phosphothreonine mark. S64 bears the Phosphoserine mark. A coiled-coil region spans residues 260-339; the sequence is KEQHGTEIEH…YEFMTVQRLK (80 aa). The segment at 390–410 is disordered; it reads EPEEPGVDGGKPPAKPSQRSD. S484 is modified (phosphoserine).

This is Coiled-coil domain-containing protein 138 (Ccdc138) from Mus musculus (Mouse).